Reading from the N-terminus, the 429-residue chain is Glutamate--tRNA ligase 1 (429 aa).

The 'HIGH' region signature appears at Pro-6 to Asn-16. The 'KMSKS' region signature appears at Lys-235 to Arg-239. An ATP-binding site is contributed by Lys-238.

It belongs to the class-I aminoacyl-tRNA synthetase family. Glutamate--tRNA ligase type 1 subfamily. As to quaternary structure, monomer.

The protein localises to the cytoplasm. It catalyses the reaction tRNA(Glu) + L-glutamate + ATP = L-glutamyl-tRNA(Glu) + AMP + diphosphate. In terms of biological role, catalyzes the attachment of glutamate to tRNA(Glu) in a two-step reaction: glutamate is first activated by ATP to form Glu-AMP and then transferred to the acceptor end of tRNA(Glu). In Campylobacter fetus subsp. fetus (strain 82-40), this protein is Glutamate--tRNA ligase 1.